A 953-amino-acid chain; its full sequence is Atromentin synthetase invA5 (953 aa).

The interval serine 37–valine 460 is adenylation (A) domain. One can recognise a Carrier domain in the interval alanine 592–isoleucine 670. The tract at residues threonine 597–aspartate 667 is thiolation and peptide carrier (T) domain. O-(pantetheine 4'-phosphoryl)serine is present on serine 629. Residues proline 693–asparagine 795 form a thioesterase (TE) domain region.

The protein belongs to the ATP-dependent AMP-binding enzyme family.

The protein operates within secondary metabolite biosynthesis. Functionally, an L-tyrosine:2-oxoglutarate aminotransferase (probably invD) and atromentin synthetase invA5 catalyze consecutive steps to turn over L-tyrosine into atromentin, which represents the generic precursor molecule for the entire terphenylquinone and pulvinic acid family of pigments, which are widely distributed secondary metabolites in homobasidiomycetes. The first step catalyzed by the aminotransferase converts L-tyrosine in to 4-hydroxyphenylpyruvate (4-HPP). Adenylation of two 4-HPP monomers by the invA5 adenylation (A) domain, covalent tethering of the monomers as a thioester and oxoester onto the invA5 thiolation (T) and thioesterase (TE) domains, respectively, and symmetric C-C-bond formation between two monomers catalyzed by the invA5 TE domain leads to atromentin. In Paxillus involutus (Naked brimcap), this protein is Atromentin synthetase invA5 (invA5).